The chain runs to 400 residues: MAMNFVTFNQDYSYLAVGNIAILEMLFSTSLVALILSPRRLQITNTKRQSTICELTFPTTVLAVRLNRKRLVIVLEDQIYLYDIQTMKLLYTIETSPNPNAICALSPSSENCYLAYPLPQKAPPSSFTPPSHAPPSSAHISPTSGEVLIFDTLKLEAINVVEAHKSPLSCLAINTEGTLLATASDKGTIIRVFSVPDAQKLYQFRRGSMPSRIFSMSFNITSTLLCVSSATETIHIFKLGHQDPSEDLPTSPIGTDSRKTNSTPRERAFSQGSSTLSGGDNSPTDGDPSDISSRKHNGTLMGMIRRTSQNVGNSFAATVGGYLPKGVTEIWEPARDFAWIRLPKTAGYGGPGSNAGPVRSVVAMSSNTPQVMVVTSDGNFYVYNVDLSKGGEGTLTKQYS.

WD repeat units follow at residues 163–203 (AHKS…KLYQ) and 208–247 (SMPSRIFSMSFNITSTLLCVSSATETIHIFKLGHQDPSED). A L/FRRG motif motif is present at residues 204–208 (FRRGS). A disordered region spans residues 241–296 (HQDPSEDLPTSPIGTDSRKTNSTPRERAFSQGSSTLSGGDNSPTDGDPSDISSRKH). Residues 256-268 (DSRKTNSTPRERA) show a composition bias toward basic and acidic residues. The span at 270–284 (SQGSSTLSGGDNSPT) shows a compositional bias: polar residues. WD repeat units lie at residues 295-341 (KHNG…AWIR) and 353-393 (SNAG…GGEG).

It belongs to the WD repeat PROPPIN family. In terms of assembly, component of the PI(3,5)P2 regulatory complex.

It localises to the preautophagosomal structure membrane. The protein resides in the vacuole membrane. It is found in the endosome membrane. In terms of biological role, the PI(3,5)P2 regulatory complex regulates both the synthesis and turnover of phosphatidylinositol 3,5-bisphosphate (PtdIns(3,5)P2). Necessary for proper vacuole morphology. Plays an important role in osmotically-induced vacuole fragmentation. Required for cytoplasm to vacuole transport (Cvt) vesicle formation, pexophagy and starvation-induced autophagy. Involved in correct ATG9 trafficking to the pre-autophagosomal structure. Might also be involved in premeiotic DNA replication. This is Autophagy-related protein 18 (ATG18) from Ajellomyces capsulatus (strain NAm1 / WU24) (Darling's disease fungus).